Here is a 251-residue protein sequence, read N- to C-terminus: Triosephosphate isomerase (251 aa).

A substrate-binding site is contributed by 9–11; sequence NWK. Residue His95 is the Electrophile of the active site. Residue Glu167 is the Proton acceptor of the active site. Substrate-binding positions include Gly173, Ser213, and 234–235; that span reads GG.

It belongs to the triosephosphate isomerase family. As to quaternary structure, homodimer.

It is found in the cytoplasm. The catalysed reaction is D-glyceraldehyde 3-phosphate = dihydroxyacetone phosphate. It functions in the pathway carbohydrate biosynthesis; gluconeogenesis. Its pathway is carbohydrate degradation; glycolysis; D-glyceraldehyde 3-phosphate from glycerone phosphate: step 1/1. Its function is as follows. Involved in the gluconeogenesis. Catalyzes stereospecifically the conversion of dihydroxyacetone phosphate (DHAP) to D-glyceraldehyde-3-phosphate (G3P). The chain is Triosephosphate isomerase from Citrifermentans bemidjiense (strain ATCC BAA-1014 / DSM 16622 / JCM 12645 / Bem) (Geobacter bemidjiensis).